A 163-amino-acid polypeptide reads, in one-letter code: MTTAAPDDSKNCIVAVTLDEESIGRSGPDIEHERAIAIYDLVEKNLFAPEGASEGPFTLHLGITGNRLMFDIRREDGTPVVAHLLSLSPFRRIVKDYFMICDSYYQAIRTATPDKIEAIDMGRRGIHDEGSRTLQERLAGKVRIDFETARRLFTLISVLHWKG.

This sequence belongs to the UPF0262 family.

The sequence is that of UPF0262 protein RPE_4483 from Rhodopseudomonas palustris (strain BisA53).